The chain runs to 509 residues: Lysine--tRNA ligase (509 aa).

2 residues coordinate Mg(2+): Glu417 and Glu424.

This sequence belongs to the class-II aminoacyl-tRNA synthetase family. In terms of assembly, homodimer. The cofactor is Mg(2+).

The protein resides in the cytoplasm. It catalyses the reaction tRNA(Lys) + L-lysine + ATP = L-lysyl-tRNA(Lys) + AMP + diphosphate. This chain is Lysine--tRNA ligase, found in Blochmanniella pennsylvanica (strain BPEN).